We begin with the raw amino-acid sequence, 123 residues long: Ribosome-binding factor A (123 aa).

It belongs to the RbfA family. In terms of assembly, monomer. Binds 30S ribosomal subunits, but not 50S ribosomal subunits or 70S ribosomes.

Its subcellular location is the cytoplasm. One of several proteins that assist in the late maturation steps of the functional core of the 30S ribosomal subunit. Associates with free 30S ribosomal subunits (but not with 30S subunits that are part of 70S ribosomes or polysomes). Required for efficient processing of 16S rRNA. May interact with the 5'-terminal helix region of 16S rRNA. This is Ribosome-binding factor A from Dechloromonas aromatica (strain RCB).